The sequence spans 1185 residues: Chromosome partition protein Smc (1185 aa).

32–39 (PNGSGKSN) contacts ATP. A coiled-coil region spans residues 167 to 494 (ISKYKSRKMD…KLNEKNSHLS (328 aa)). Residues 521–639 (TGIIGVVADQ…TDLKSAIEIA (119 aa)) enclose the SMC hinge domain. The stretch at 677–1031 (RSRKIEDLKK…KVIQEIEETM (355 aa)) forms a coiled coil.

It belongs to the SMC family. As to quaternary structure, homodimer.

It is found in the cytoplasm. Required for chromosome condensation and partitioning. The chain is Chromosome partition protein Smc from Halothermothrix orenii (strain H 168 / OCM 544 / DSM 9562).